A 194-amino-acid polypeptide reads, in one-letter code: ATP-dependent Clp protease proteolytic subunit (194 aa).

Residue Ser-98 is the Nucleophile of the active site. His-123 is an active-site residue.

This sequence belongs to the peptidase S14 family. In terms of assembly, fourteen ClpP subunits assemble into 2 heptameric rings which stack back to back to give a disk-like structure with a central cavity, resembling the structure of eukaryotic proteasomes.

Its subcellular location is the cytoplasm. The catalysed reaction is Hydrolysis of proteins to small peptides in the presence of ATP and magnesium. alpha-casein is the usual test substrate. In the absence of ATP, only oligopeptides shorter than five residues are hydrolyzed (such as succinyl-Leu-Tyr-|-NHMec, and Leu-Tyr-Leu-|-Tyr-Trp, in which cleavage of the -Tyr-|-Leu- and -Tyr-|-Trp bonds also occurs).. In terms of biological role, cleaves peptides in various proteins in a process that requires ATP hydrolysis. Has a chymotrypsin-like activity. Plays a major role in the degradation of misfolded proteins. This is ATP-dependent Clp protease proteolytic subunit from Wigglesworthia glossinidia brevipalpis.